Reading from the N-terminus, the 643-residue chain is Probable extracellular metalloproteinase 4 (643 aa).

Positions 1–18 are cleaved as a signal peptide; that stretch reads MHGLLLAGLLALPLNVFA. The propeptide occupies 19–254; the sequence is HPTESHSSGV…VHSVVDYVSA (236 aa). The tract at residues 49–69 is disordered; the sequence is SDAVPKQDGESFTTSSTGDDN. The segment covering 58-69 has biased composition (polar residues); sequence ESFTTSSTGDDN. Asn271 and Asn420 each carry an N-linked (GlcNAc...) asparagine glycan. His437 serves as a coordination point for Zn(2+). Glu438 is a catalytic residue. His441 lines the Zn(2+) pocket. Asn603 and Asn629 each carry an N-linked (GlcNAc...) asparagine glycan.

This sequence belongs to the peptidase M36 family. It depends on Zn(2+) as a cofactor.

It localises to the secreted. In terms of biological role, secreted metalloproteinase probably acting as a virulence factor. This is Probable extracellular metalloproteinase 4 (MEP4) from Trichophyton verrucosum (strain HKI 0517).